The sequence spans 767 residues: AMP deaminase 3 (767 aa).

2 positions are modified to phosphoserine: serine 85 and serine 107. 2 disordered regions span residues 89-111 (QMPP…PTTP) and 181-205 (LGHP…PLPQ). Residues histidine 317 and histidine 319 each contribute to the Zn(2+) site. Substrate is bound by residues histidine 319 and 388–393 (KFNSKY). Histidine 586 contributes to the Zn(2+) binding site. Position 589 (glutamate 589) interacts with substrate. Residue histidine 608 is the Proton acceptor of the active site. Aspartate 663 is a binding site for Zn(2+). 664 to 667 (DPMQ) contributes to the substrate binding site.

It belongs to the metallo-dependent hydrolases superfamily. Adenosine and AMP deaminases family. As to quaternary structure, homotetramer. Zn(2+) is required as a cofactor.

The enzyme catalyses AMP + H2O + H(+) = IMP + NH4(+). It participates in purine metabolism; IMP biosynthesis via salvage pathway; IMP from AMP: step 1/1. AMP deaminase plays a critical role in energy metabolism. The chain is AMP deaminase 3 from Homo sapiens (Human).